A 335-amino-acid chain; its full sequence is Ketol-acid reductoisomerase (NADP(+)) 2 (335 aa).

The 180-residue stretch at 1 to 180 folds into the KARI N-terminal Rossmann domain; it reads MKTYYEQDAN…GCTRAGVIET (180 aa). NADP(+) contacts are provided by residues 24-27, Arg-47, Ser-51, and 81-84; these read YGSQ and DEQQ. Residue His-106 is part of the active site. Gly-132 is an NADP(+) binding site. A KARI C-terminal knotted domain is found at 181 to 326; that stretch reads TFQEETETDL…EELREMMSWI (146 aa). Residues Asp-189, Glu-193, Glu-225, and Glu-229 each coordinate Mg(2+). Ser-250 lines the substrate pocket.

The protein belongs to the ketol-acid reductoisomerase family. The cofactor is Mg(2+).

The enzyme catalyses (2R)-2,3-dihydroxy-3-methylbutanoate + NADP(+) = (2S)-2-acetolactate + NADPH + H(+). It carries out the reaction (2R,3R)-2,3-dihydroxy-3-methylpentanoate + NADP(+) = (S)-2-ethyl-2-hydroxy-3-oxobutanoate + NADPH + H(+). It functions in the pathway amino-acid biosynthesis; L-isoleucine biosynthesis; L-isoleucine from 2-oxobutanoate: step 2/4. The protein operates within amino-acid biosynthesis; L-valine biosynthesis; L-valine from pyruvate: step 2/4. Involved in the biosynthesis of branched-chain amino acids (BCAA). Catalyzes an alkyl-migration followed by a ketol-acid reduction of (S)-2-acetolactate (S2AL) to yield (R)-2,3-dihydroxy-isovalerate. In the isomerase reaction, S2AL is rearranged via a Mg-dependent methyl migration to produce 3-hydroxy-3-methyl-2-ketobutyrate (HMKB). In the reductase reaction, this 2-ketoacid undergoes a metal-dependent reduction by NADPH to yield (R)-2,3-dihydroxy-isovalerate. The sequence is that of Ketol-acid reductoisomerase (NADP(+)) 2 from Bacillus anthracis.